Reading from the N-terminus, the 249-residue chain is Major phosphate-irrepressible acid phosphatase (249 aa).

The N-terminal stretch at 1–20 (MKKNIIAGCLFSLFSLSALA) is a signal peptide.

This sequence belongs to the class A bacterial acid phosphatase family. Homotetramer.

The protein resides in the periplasm. The catalysed reaction is a phosphate monoester + H2O = an alcohol + phosphate. This chain is Major phosphate-irrepressible acid phosphatase (phoC), found in Morganella morganii (Proteus morganii).